Here is a 373-residue protein sequence, read N- to C-terminus: Indole glucosinolate O-methyltransferase 3 (373 aa).

S-adenosyl-L-homocysteine contacts are provided by glycine 217, aspartate 240, aspartate 260, methionine 261, and lysine 274. The active-site Proton acceptor is the histidine 278.

Belongs to the class I-like SAM-binding methyltransferase superfamily. Cation-independent O-methyltransferase family.

Its pathway is secondary metabolite biosynthesis. Involved in indole glucosinolate biosynthesis. Catalyzes methoxylation reactions of the glucosinolate indole ring. Converts the hydroxy intermediates 4-hydroxy-indol-3-yl-methylglucosinolate (4OH-I3M) and 1-hydroxy-indol-3-yl-methylglucosinolate (1OH-I3M) to 4-methoxy-indol-3-yl-methylglucosinolate (4MO-I3M) and 1-methoxy-indol-3-yl-methylglucosinolate(1MO-I3M), respectively. The protein is Indole glucosinolate O-methyltransferase 3 of Arabidopsis thaliana (Mouse-ear cress).